The following is a 1068-amino-acid chain: Tricorn protease homolog (1068 aa).

Residues 61–326 (MKAYYMYPDI…DSLTKLDINL (266 aa)) form a six-bladed beta propeller region. A seven-bladed beta propeller region spans residues 338-686 (VNVMEYMNEA…RKGGVIDLSR (349 aa)). The segment at 692–762 (EPEKEWRQML…RTSHSYETAY (71 aa)) is C-1. Catalysis depends on H756, which acts as the Charge relay system. The interval 771–864 (SVGGLGAEFE…RVTVKVLKDE (94 aa)) is PDZ-like. The interval 865-1068 (RFLIYRYWVE…TAIELALKQL (204 aa)) is C-2. Substrate is bound at residue G927. The Nucleophile role is filled by S974. The active-site Charge relay system is the E1032.

The protein belongs to the peptidase S41B family.

It is found in the cytoplasm. In terms of biological role, degrades oligopeptides in a sequential manner. The sequence is that of Tricorn protease homolog (tri) from Saccharolobus solfataricus (strain ATCC 35092 / DSM 1617 / JCM 11322 / P2) (Sulfolobus solfataricus).